The sequence spans 98 residues: uncharacterized protein (98 aa).

Residues 53 to 98 (AALEGGRHRHRGESASGNGIQHGVPPNVALIPSGSTLLTPARSGHV) are disordered.

This is an uncharacterized protein from Mycolicibacterium smegmatis (strain ATCC 700084 / mc(2)155) (Mycobacterium smegmatis).